An 807-amino-acid chain; its full sequence is Ribosome-releasing factor 2, mitochondrial (807 aa).

Residues 1-18 (MFCRKYAFQTWKQFSRFY) constitute a mitochondrion transit peptide. The region spanning 27–315 (SKTRNIGIIA…GITKYLPSPL (289 aa)) is the tr-type G domain. Residues 36–43 (AHIDAGKT), 100–104 (DTPGH), and 154–157 (NKMD) contribute to the GTP site.

It belongs to the TRAFAC class translation factor GTPase superfamily. Classic translation factor GTPase family. EF-G/EF-2 subfamily.

It is found in the mitochondrion. In terms of biological role, mitochondrial GTPase that mediates the disassembly of ribosomes from messenger RNA at the termination of mitochondrial protein biosynthesis. Not involved in the GTP-dependent ribosomal translocation step during translation elongation. This Candida dubliniensis (strain CD36 / ATCC MYA-646 / CBS 7987 / NCPF 3949 / NRRL Y-17841) (Yeast) protein is Ribosome-releasing factor 2, mitochondrial.